A 344-amino-acid polypeptide reads, in one-letter code: L-rhamnose-proton symporter (344 aa).

10 consecutive transmembrane segments (helical) span residues 4–24, 38–58, 68–88, 101–121, 137–157, 175–195, 214–234, 259–279, 290–310, and 321–341; these read AITM…CFYA, WSVG…ALLL, FNLS…IGNI, MGIG…TPII, TLLG…AGQL, LLLA…MNAA, LPSY…FCFI, ILLS…YAWG, MSWM…GLVL, and VAVL…VGLG.

This sequence belongs to the L-rhamnose transporter (TC 2.A.7.6) family.

Its subcellular location is the cell inner membrane. It carries out the reaction L-rhamnopyranose(in) + H(+)(in) = L-rhamnopyranose(out) + H(+)(out). Functionally, uptake of L-rhamnose across the cytoplasmic membrane with the concomitant transport of protons into the cell (symport system). This Salmonella dublin (strain CT_02021853) protein is L-rhamnose-proton symporter.